We begin with the raw amino-acid sequence, 240 residues long: Glutathione S-transferase U9 (240 aa).

Residues 7-86 enclose the GST N-terminal domain; the sequence is NKVILHGSFA…YIDETWSNGP (80 aa). Glutathione-binding positions include 17-18, 43-44, 57-58, and 70-71; these read SP, NK, KI, and ES. Residues 92 to 226 enclose the GST C-terminal domain; sequence DPYRRSKVRF…EQILEILRAF (135 aa). Residue Thr-161 is modified to Phosphothreonine.

This sequence belongs to the GST superfamily. Tau family.

The protein localises to the cytoplasm. Its subcellular location is the cytosol. It catalyses the reaction RX + glutathione = an S-substituted glutathione + a halide anion + H(+). Its function is as follows. May be involved in the conjugation of reduced glutathione to a wide number of exogenous and endogenous hydrophobic electrophiles and have a detoxification role against certain herbicides. The polypeptide is Glutathione S-transferase U9 (GSTU9) (Arabidopsis thaliana (Mouse-ear cress)).